Here is a 775-residue protein sequence, read N- to C-terminus: Metal transporter CNNM4 (775 aa).

Residues M1 to R178 are Extracellular-facing. 2 N-linked (GlcNAc...) asparagine glycosylation sites follow: N85 and N122. The CNNM transmembrane domain occupies R178–E358. The chain crosses the membrane as a helical span at residues F179–F199. Over S200–N240 the chain is Cytoplasmic. Positions Y241–L261 form an intramembrane region, helical. Residues D262 to L264 lie on the Cytoplasmic side of the membrane. A helical transmembrane segment spans residues I265–I285. At L286–R293 the chain is on the extracellular side. The helical transmembrane segment at H294–L316 threads the bilayer. Over S317–I775 the chain is Cytoplasmic. CBS domains are found at residues M377 to L438 and Y445 to E511. Phosphoserine occurs at positions 660, 664, and 770.

This sequence belongs to the ACDP family. In terms of assembly, interacts with COX11. In terms of tissue distribution, widely expressed. Highly expressed in heart.

Its subcellular location is the cell membrane. Functionally, probable metal transporter. The interaction with the metal ion chaperone COX11 suggests that it may play a role in sensory neuron functions. May play a role in biomineralization and retinal function. In Homo sapiens (Human), this protein is Metal transporter CNNM4 (CNNM4).